Reading from the N-terminus, the 217-residue chain is Translation initiation factor IF-3 (217 aa).

The interval 179–217 is disordered; that stretch reads PRKTPLVKKEEKEAAPTKAVRTIPAPPRPTAAKVAAQQA.

This sequence belongs to the IF-3 family. Monomer.

It localises to the cytoplasm. Functionally, IF-3 binds to the 30S ribosomal subunit and shifts the equilibrium between 70S ribosomes and their 50S and 30S subunits in favor of the free subunits, thus enhancing the availability of 30S subunits on which protein synthesis initiation begins. The chain is Translation initiation factor IF-3 from Parasynechococcus marenigrum (strain WH8102).